The chain runs to 207 residues: 3-demethoxyubiquinol 3-hydroxylase (207 aa).

6 residues coordinate Fe cation: glutamate 56, glutamate 86, histidine 89, glutamate 138, glutamate 170, and histidine 173.

The protein belongs to the COQ7 family. Fe cation is required as a cofactor.

It is found in the cell membrane. The catalysed reaction is a 5-methoxy-2-methyl-3-(all-trans-polyprenyl)benzene-1,4-diol + AH2 + O2 = a 3-demethylubiquinol + A + H2O. It functions in the pathway cofactor biosynthesis; ubiquinone biosynthesis. Catalyzes the hydroxylation of 2-nonaprenyl-3-methyl-6-methoxy-1,4-benzoquinol during ubiquinone biosynthesis. This is 3-demethoxyubiquinol 3-hydroxylase from Cupriavidus taiwanensis (strain DSM 17343 / BCRC 17206 / CCUG 44338 / CIP 107171 / LMG 19424 / R1) (Ralstonia taiwanensis (strain LMG 19424)).